Here is a 184-residue protein sequence, read N- to C-terminus: Rhox homeobox family member 1 (184 aa).

Residues 26 to 104 are disordered; the sequence is QLGAASSAEG…GPQPENMQPR (79 aa). Residues 88–99 show a composition bias toward low complexity; the sequence is PAQAAMEGPQPE. A DNA-binding region (homeobox) is located at residues 103–162; sequence PRTRRTKFTLLQVEELESVFRHTQYPDVPTRRELAENLGVTEDKVRVWFKNKRARCRRHQ. Residues 155–164 carry the Nuclear localization signal motif; it reads RARCRRHQRE.

The protein belongs to the paired-like homeobox family. PEPP subfamily. In terms of assembly, does not interact with itself. As to expression, ovary, testis and epididymis. Also detected in the prostate and the mammary gland. Expressed in many tumor cell lines derived from acute lymphocytic leukemia, prostate, endometrial adenocarcinoma, melanoma, bladder carcinoma, colon carcinoma, erythroleukemia and breast carcinoma. Not expressed in placenta. In testis, mainly expressed in germ cells, but also detected in somatic cells such as Sertoli cells, Leydig cells and peritubular cells.

It localises to the nucleus. Its function is as follows. Transcription factor maybe involved in reproductive processes. Modulates expression of target genes encoding proteins involved in processes relevant to spermatogenesis. The chain is Rhox homeobox family member 1 from Homo sapiens (Human).